Consider the following 175-residue polypeptide: ATP synthase subunit delta (175 aa).

This sequence belongs to the ATPase delta chain family. In terms of assembly, F-type ATPases have 2 components, F(1) - the catalytic core - and F(0) - the membrane proton channel. F(1) has five subunits: alpha(3), beta(3), gamma(1), delta(1), epsilon(1). F(0) has three main subunits: a(1), b(2) and c(10-14). The alpha and beta chains form an alternating ring which encloses part of the gamma chain. F(1) is attached to F(0) by a central stalk formed by the gamma and epsilon chains, while a peripheral stalk is formed by the delta and b chains.

The protein localises to the cell inner membrane. F(1)F(0) ATP synthase produces ATP from ADP in the presence of a proton or sodium gradient. F-type ATPases consist of two structural domains, F(1) containing the extramembraneous catalytic core and F(0) containing the membrane proton channel, linked together by a central stalk and a peripheral stalk. During catalysis, ATP synthesis in the catalytic domain of F(1) is coupled via a rotary mechanism of the central stalk subunits to proton translocation. Its function is as follows. This protein is part of the stalk that links CF(0) to CF(1). It either transmits conformational changes from CF(0) to CF(1) or is implicated in proton conduction. This chain is ATP synthase subunit delta, found in Stenotrophomonas maltophilia (strain R551-3).